The primary structure comprises 446 residues: MGYTKAEILKALKGENVKFLRLQITDILGVVKNVEVPESQFEKALDGEIMFDGSSIEGFTRIEESDMLLRPDYNTFVILPDLVEDPKRGRVARLICDVYYPDGRPFEGDPRYVLKRQIERLKKLGFDNLYAGPEPEFFLFLRTPEGLPTTETHDRAGYFDLAPIDKGEEARRDMVNALVAMGFEIEAAHHEVAPGQHEIDFKYADALTTADNIATFKWVVKRIALNHGLHATFLPKPIRGINGSGMHTHLSLFKDGENAFYDPNAEYQLSQTALHFIAGLLEHAAGMVAVTNPLVNSYKRLTPGYEAPTNIAWSASNRSAMIRIPARRGVGTRAELRMPDPSCNPYLALAVMAAAGADGIERKLLPPPPIQRNIYQMTVRERRKHKIRELPGTLREALEALRKDPVIREALGEHVYTHFLQAKQMEWDDYRVTVHQWELDRYLATY.

Residues Glu15–Gly103 enclose the GS beta-grasp domain. A GS catalytic domain is found at Pro110–Tyr446. Mg(2+) contacts are provided by Glu134 and Glu136. Glu186 is an ATP binding site. The Mg(2+) site is built by Glu191 and Glu198. L-glutamate is bound by residues Asn242–Gly243 and Gly243. His247 provides a ligand contact to Mg(2+). ATP is bound at residue Ser251. Arg300, Glu306, and Arg318 together coordinate L-glutamate. ATP contacts are provided by Arg318 and Arg323. Residue Glu335 participates in Mg(2+) binding. Arg337 is a binding site for L-glutamate.

This sequence belongs to the glutamine synthetase family. Interacts with GCBP (TTHA1554). Requires Mg(2+) as cofactor.

The protein localises to the cytoplasm. The enzyme catalyses L-glutamate + NH4(+) + ATP = L-glutamine + ADP + phosphate + H(+). Its activity is regulated as follows. Activity increases by approximately two-fold in the presence of GCBP. Functionally, catalyzes the ATP-dependent biosynthesis of glutamine from glutamate and ammonia. This Thermus thermophilus (strain ATCC 27634 / DSM 579 / HB8) protein is Glutamine synthetase.